Consider the following 513-residue polypeptide: Tryptophan--tRNA ligase 1 (513 aa).

Residues 86–94 carry the 'HIGH' region motif; the sequence is PTGDPHIGH. A 'KMSKS' region motif is present at residues 393–397; sequence KMSSS.

The protein belongs to the class-I aminoacyl-tRNA synthetase family.

It is found in the cytoplasm. It catalyses the reaction tRNA(Trp) + L-tryptophan + ATP = L-tryptophyl-tRNA(Trp) + AMP + diphosphate + H(+). The chain is Tryptophan--tRNA ligase 1 from Halobacterium salinarum (strain ATCC 700922 / JCM 11081 / NRC-1) (Halobacterium halobium).